The sequence spans 397 residues: tRNA (guanine-N(7)-)-methyltransferase non-catalytic subunit wuho (397 aa).

WD repeat units lie at residues 75–115, 163–202, 206–244, and 303–343; these read KVEV…AQLL, GHLSIVYDVLWSEDQQYIITCDRDDKIRVTNYPATFDIHS, GHKEFVSGLAMLTEQHIISASGDKTLRVWNYTCGKELLL, and AGTW…RASG.

It belongs to the WD repeat TRM82 family. Forms a heterodimer with the catalytic subunit Mettl1. Interacts with mei-P26 and weakly interacts with bgcn; required for the function or formation of the mei-P26-bgcn-bam-sxl complex. Interacts with nanos; may be involved in mei-P26-dependent derepression of the BMP signaling pathway. Interacts with Myc; the interaction may be mediated by mei-P26 and may be involved in the regulation of ribosome biogenesis. As to expression, in testis, it is present at high level in hub cells, a niche for germline stem cells of testis. Ubiquitously expressed in all testicular cells throughout spermatogenesis. Ubiquitously expressed in all germline and somatic cells of the ovary.

The protein resides in the nucleus. It localises to the cytoplasm. It functions in the pathway tRNA modification; N(7)-methylguanine-tRNA biosynthesis. In terms of biological role, required for the Mettl1-dependent formation of N(7)-methylguanine at position 46 (m7G46) in tRNA. In the Mettl1-wuho methyltransferase complex, it is required to stabilize and induce conformational changes of the catalytic subunit. Required for binding of nanos mRNA and repression of translation by the mei-P26-bgcn-bam-sxl complex. May cooperate with mei-P26 and nanos to derepress the BMP signaling pathway. May cooperate with mei-P26 to suppress expression of a subset of microRNAs. May cooperate with mei-P26 to regulate bam expression levels in germline cells during gametogenesis. Required to promote mitosis to meiosis transition during gametogenesis. May regulate germline cell division in part by regulating ribosome biogenesis. The polypeptide is tRNA (guanine-N(7)-)-methyltransferase non-catalytic subunit wuho (Drosophila persimilis (Fruit fly)).